The primary structure comprises 744 residues: Dolasta-1(15),8-diene synthase (744 aa).

The terpene cyclase stretch occupies residues 1–344 (MASTMMNYQD…RRYNPAAPLP (344 aa)). D108 and D112 together coordinate Mg(2+). Substrate contacts are provided by residues D108, D112, 198–201 (RHYD), 246–250 (SWDKE), and 336–337 (RY). Residues 108 to 112 (DDLTD) carry the DDXXD motif. Positions 345–744 (RREDIGKVNG…LHLITFQLKV (400 aa)) are prenyltransferase. A disordered region spans residues 399–422 (YTTMTPAETSSDDKKKKAKASHET). Positions 409–422 (SDDKKKKAKASHET) are enriched in basic and acidic residues. The isopentenyl diphosphate site is built by R459 and H488. Mg(2+) contacts are provided by D495 and D499. The short motif at 495–499 (DDVQD) is the DDXXD element. R504 provides a ligand contact to dimethylallyl diphosphate. Position 505 (R505) interacts with isopentenyl diphosphate. Dimethylallyl diphosphate-binding residues include K581, T582, and Q617.

The protein in the N-terminal section; belongs to the terpene synthase family. In the C-terminal section; belongs to the FPP/GGPP synthase family. In terms of assembly, hexamer. It depends on Mg(2+) as a cofactor.

The catalysed reaction is isopentenyl diphosphate + (2E,6E)-farnesyl diphosphate = (2E,6E,10E)-geranylgeranyl diphosphate + diphosphate. It catalyses the reaction (2E,6E,10E)-geranylgeranyl diphosphate = (5R,12R,14S)-dolasta-1(15),8-diene + diphosphate. It carries out the reaction (2E,6E,10E)-geranylgeranyl diphosphate = delta-araneosene + diphosphate. Bifunctional terpene synthase involved in the biosynthesis of the diterpenes delta-araneosene and dolasta-1(15),8-diene. The C-terminal prenyltransferase domain of CgDS catalyzes formation of the universal precursor of diterpene, geranylgeranyl diphosphate (GGPP), whereas the N-terminal terpene cyclase domain catalyzes the cyclization of GGPP to the intermediate delta-araneosene that is further converted to dolasta-1(15),8-diene in a second cyclization event. In some cases the cyclization stops at the delta-araneosene stage. The protein is Dolasta-1(15),8-diene synthase of Colletotrichum gloeosporioides (Anthracnose fungus).